A 205-amino-acid chain; its full sequence is RNA pyrophosphohydrolase (205 aa).

The 144-residue stretch at Gly6 to Arg149 folds into the Nudix hydrolase domain. Residues Gly38–Gly59 carry the Nudix box motif. The disordered stretch occupies residues Gly178–Asp205. Over residues Arg186–Gly195 the composition is skewed to basic residues.

Belongs to the Nudix hydrolase family. RppH subfamily. Requires a divalent metal cation as cofactor.

In terms of biological role, accelerates the degradation of transcripts by removing pyrophosphate from the 5'-end of triphosphorylated RNA, leading to a more labile monophosphorylated state that can stimulate subsequent ribonuclease cleavage. This is RNA pyrophosphohydrolase from Xanthomonas campestris pv. campestris (strain 8004).